Here is a 421-residue protein sequence, read N- to C-terminus: UDP-N-acetylglucosamine 1-carboxyvinyltransferase (421 aa).

Residue 22-23 (KN) participates in phosphoenolpyruvate binding. R93 contributes to the UDP-N-acetyl-alpha-D-glucosamine binding site. C117 (proton donor) is an active-site residue. At C117 the chain carries 2-(S-cysteinyl)pyruvic acid O-phosphothioketal. Residues 122–126 (RPVDL), D308, and I330 each bind UDP-N-acetyl-alpha-D-glucosamine.

The protein belongs to the EPSP synthase family. MurA subfamily.

The protein resides in the cytoplasm. The enzyme catalyses phosphoenolpyruvate + UDP-N-acetyl-alpha-D-glucosamine = UDP-N-acetyl-3-O-(1-carboxyvinyl)-alpha-D-glucosamine + phosphate. The protein operates within cell wall biogenesis; peptidoglycan biosynthesis. In terms of biological role, cell wall formation. Adds enolpyruvyl to UDP-N-acetylglucosamine. The chain is UDP-N-acetylglucosamine 1-carboxyvinyltransferase from Pseudomonas savastanoi pv. phaseolicola (strain 1448A / Race 6) (Pseudomonas syringae pv. phaseolicola (strain 1448A / Race 6)).